The chain runs to 373 residues: Asporin (373 aa).

The first 15 residues, 1 to 15 (MKEYVMLLLLAVCSA), serve as a signal peptide directing secretion. Residues 16 to 32 (KPFFSPSHTALKNMMLK) constitute a propeptide that is removed on maturation. Residue Ser-48 is glycosylated (O-linked (GalNAc...) serine). One can recognise an LRRNT domain in the interval 59-95 (FFPFDLFPTCPFGCQCYSRVVHCSDLGLTSVPNNIPF). 2 disulfide bridges follow: Cys-68-Cys-74 and Cys-72-Cys-81. 11 LRR repeats span residues 96-117 (DTRM…DFKG), 120-141 (SLYA…TFLT), 144-166 (KLRR…PKSL), 167-186 (AELR…TFKG), 189-212 (ALHV…AFEG), 235-255 (TLLE…EDLK), 259-280 (ELQR…TFAN), 283-305 (RVRE…QELK), 306-327 (YLQI…DFCP), 328-349 (TVPK…PMKY), and 350-373 (WEIQ…NVGK). An interaction with TGFB1 region spans residues 159–205 (PLNLPKSLAELRIHDNKVKKIQKDTFKGMNALHVLEMSANPLENNGI). A glycan (N-linked (GlcNAc...) asparagine) is linked at Asn-275. The cysteines at positions 326 and 359 are disulfide-linked.

Belongs to the small leucine-rich proteoglycan (SLRP) family. SLRP class I subfamily. As to quaternary structure, interacts with type I collagen. DCN can inhibit collagen binding. Interacts with TGFB1, TGFB2 and TGFB3. DCN, BGN, and FMOD inhibit binding to TGFB1. Interacts with BMP2. Interacts in vitro with type II collagen. Higher expression in heart, also detected in kidney, stomach, testes, and skin but only weakly in lung, skeletal muscle, small intestine, and thymus. Expressed specifically and predominantly in the periodontal ligament (PDL). During tooth development, strong expression is seen in the dental follicle, which is the progenitor tissue that forms cementum, alveolar bone, and the PDL. Expressed in the perichondria of the maxilla, mandible, vertebrae, and long bones. Predominantly expressed in the perichondrium/periosteum of long bones (at protein level).

It localises to the secreted. Its subcellular location is the extracellular space. The protein localises to the extracellular matrix. Functionally, binds calcium and plays a role in osteoblast-driven collagen biomineralization activity. Critical regulator of TGF-beta in articular cartilage and plays an essential role in cartilage homeostasis and osteoarthritis (OA) pathogenesis. Negatively regulates chondrogenesis in the articular cartilage by blocking the TGF-beta/receptor interaction on the cell surface and inhibiting the canonical TGF-beta/Smad signal. Negatively regulates periodontal ligament (PDL) differentiation and mineralization to ensure that the PDL is not ossified and to maintain homeostasis of the tooth-supporting system. Inhibits BMP2-induced cytodifferentiation of PDL cells by preventing its binding to BMPR1B/BMP type-1B receptor, resulting in inhibition of BMP-dependent activation of SMAD proteins. Inhibits the interaction between TGFB1 and TGF-beta receptor type II in the presence of heparin/heparan sulfate in vitro. The protein is Asporin (Aspn) of Mus musculus (Mouse).